The chain runs to 437 residues: 3-phosphoshikimate 1-carboxyvinyltransferase (437 aa).

Positions 22, 23, and 27 each coordinate 3-phosphoshikimate. K22 lines the phosphoenolpyruvate pocket. 2 residues coordinate phosphoenolpyruvate: G96 and R125. 4 residues coordinate 3-phosphoshikimate: S170, Q172, D323, and K350. Q172 contributes to the phosphoenolpyruvate binding site. D323 (proton acceptor) is an active-site residue. Phosphoenolpyruvate-binding residues include R354 and R396.

It belongs to the EPSP synthase family. In terms of assembly, monomer.

It localises to the cytoplasm. The catalysed reaction is 3-phosphoshikimate + phosphoenolpyruvate = 5-O-(1-carboxyvinyl)-3-phosphoshikimate + phosphate. Its pathway is metabolic intermediate biosynthesis; chorismate biosynthesis; chorismate from D-erythrose 4-phosphate and phosphoenolpyruvate: step 6/7. Functionally, catalyzes the transfer of the enolpyruvyl moiety of phosphoenolpyruvate (PEP) to the 5-hydroxyl of shikimate-3-phosphate (S3P) to produce enolpyruvyl shikimate-3-phosphate and inorganic phosphate. The protein is 3-phosphoshikimate 1-carboxyvinyltransferase of Synechococcus sp. (strain RCC307).